Here is a 307-residue protein sequence, read N- to C-terminus: NAD(+) hydrolase TcpC (307 aa).

A helical transmembrane segment spans residues 22–42 (YNILFFIFLSIAIPFLLFLAW). A TIR domain is found at 169–303 (THYDFFISHA…EIARELAEIA (135 aa)). NAD(+)-binding positions include 178–179 (AK) and E208. Residue E244 is part of the active site.

As to quaternary structure, interacts with host MYD88. Interacts with host TLR4.

Its subcellular location is the secreted. The protein resides in the membrane. The catalysed reaction is NAD(+) + H2O = ADP-D-ribose + nicotinamide + H(+). The enzyme catalyses NADP(+) + H2O = ADP-D-ribose 2'-phosphate + nicotinamide + H(+). Virulence factor that suppresses host Toll-like receptor (TLR)-mediated cytokine production upon infection, thereby increasing bacterial burden in the urinary tract and promoting renal tissue damage. Acts as a NAD(+) hydrolase (NADase) by catalyzing cleavage of NAD(+) into ADP-D-ribose (ADPR) and nicotinamide. Also able to hydrolyze NADP(+), but not other NAD(+)-related molecules. The polypeptide is NAD(+) hydrolase TcpC (Escherichia coli O6:H1 (strain CFT073 / ATCC 700928 / UPEC)).